The chain runs to 353 residues: Very-long-chain 3-oxoacyl-CoA reductase (353 aa).

Residues 33-53 (AAWALIAAGGFFVISRALLFG) form a helical membrane-spanning segment. NADP(+) contacts are provided by valine 78, aspartate 133, aspartate 141, asparagine 160, tyrosine 227, lysine 231, isoleucine 260, and serine 262. Residue tyrosine 227 is the Proton donor of the active site. Lysine 231 serves as the catalytic Lowers pKa of active site Tyr.

The protein belongs to the short-chain dehydrogenases/reductases (SDR) family.

Its subcellular location is the endoplasmic reticulum membrane. The catalysed reaction is a very-long-chain (3R)-3-hydroxyacyl-CoA + NADP(+) = a very-long-chain 3-oxoacyl-CoA + NADPH + H(+). It participates in lipid metabolism; fatty acid biosynthesis. Its function is as follows. Component of the microsomal membrane bound fatty acid elongation system, which produces the 26-carbon very long-chain fatty acids (VLCFA) from palmitate. Catalyzes the reduction of the 3-ketoacyl-CoA intermediate that is formed in each cycle of fatty acid elongation. VLCFAs serve as precursors for ceramide and sphingolipids. This Aspergillus terreus (strain NIH 2624 / FGSC A1156) protein is Very-long-chain 3-oxoacyl-CoA reductase.